Reading from the N-terminus, the 310-residue chain is Porphobilinogen deaminase (310 aa).

Cys242 carries the S-(dipyrrolylmethanemethyl)cysteine modification.

This sequence belongs to the HMBS family. As to quaternary structure, monomer. Requires dipyrromethane as cofactor.

The enzyme catalyses 4 porphobilinogen + H2O = hydroxymethylbilane + 4 NH4(+). It participates in porphyrin-containing compound metabolism; protoporphyrin-IX biosynthesis; coproporphyrinogen-III from 5-aminolevulinate: step 2/4. Functionally, tetrapolymerization of the monopyrrole PBG into the hydroxymethylbilane pre-uroporphyrinogen in several discrete steps. The chain is Porphobilinogen deaminase from Halorhodospira halophila (strain DSM 244 / SL1) (Ectothiorhodospira halophila (strain DSM 244 / SL1)).